The primary structure comprises 108 residues: UPF0145 protein MADE_1007770 (108 aa).

The protein belongs to the UPF0145 family.

The protein is UPF0145 protein MADE_1007770 of Alteromonas mediterranea (strain DSM 17117 / CIP 110805 / LMG 28347 / Deep ecotype).